The primary structure comprises 157 residues: Crossover junction endodeoxyribonuclease RuvC (157 aa).

Residues Asp-7, Glu-66, and Asp-139 contribute to the active site. Mg(2+)-binding residues include Asp-7, Glu-66, and Asp-139.

This sequence belongs to the RuvC family. As to quaternary structure, homodimer which binds Holliday junction (HJ) DNA. The HJ becomes 2-fold symmetrical on binding to RuvC with unstacked arms; it has a different conformation from HJ DNA in complex with RuvA. In the full resolvosome a probable DNA-RuvA(4)-RuvB(12)-RuvC(2) complex forms which resolves the HJ. Mg(2+) is required as a cofactor.

Its subcellular location is the cytoplasm. The catalysed reaction is Endonucleolytic cleavage at a junction such as a reciprocal single-stranded crossover between two homologous DNA duplexes (Holliday junction).. The RuvA-RuvB-RuvC complex processes Holliday junction (HJ) DNA during genetic recombination and DNA repair. Endonuclease that resolves HJ intermediates. Cleaves cruciform DNA by making single-stranded nicks across the HJ at symmetrical positions within the homologous arms, yielding a 5'-phosphate and a 3'-hydroxyl group; requires a central core of homology in the junction. The consensus cleavage sequence is 5'-(A/T)TT(C/G)-3'. Cleavage occurs on the 3'-side of the TT dinucleotide at the point of strand exchange. HJ branch migration catalyzed by RuvA-RuvB allows RuvC to scan DNA until it finds its consensus sequence, where it cleaves and resolves the cruciform DNA. The protein is Crossover junction endodeoxyribonuclease RuvC of Helicobacter acinonychis (strain Sheeba).